A 44-amino-acid chain; its full sequence is Photosystem I reaction center subunit IX (44 aa).

The helical transmembrane segment at 7 to 27 (YLSAAPVLSTIWFGALAGLLI) threads the bilayer.

Belongs to the PsaJ family.

The protein resides in the plastid. Its subcellular location is the chloroplast thylakoid membrane. In terms of biological role, may help in the organization of the PsaE and PsaF subunits. The chain is Photosystem I reaction center subunit IX from Pelargonium hortorum (Common geranium).